We begin with the raw amino-acid sequence, 408 residues long: Peptidase T (408 aa).

Zn(2+) is bound at residue His78. The active site involves Asp80. Asp140 lines the Zn(2+) pocket. The active-site Proton acceptor is the Glu174. 3 residues coordinate Zn(2+): Glu175, Asp197, and His379.

Belongs to the peptidase M20B family. Zn(2+) serves as cofactor.

The protein resides in the cytoplasm. The enzyme catalyses Release of the N-terminal residue from a tripeptide.. Its function is as follows. Cleaves the N-terminal amino acid of tripeptides. In Staphylococcus aureus (strain Mu3 / ATCC 700698), this protein is Peptidase T.